The sequence spans 97 residues: Putative membrane protein insertion efficiency factor (97 aa).

This sequence belongs to the UPF0161 family.

Its subcellular location is the cell inner membrane. Its function is as follows. Could be involved in insertion of integral membrane proteins into the membrane. This chain is Putative membrane protein insertion efficiency factor, found in Chlamydia muridarum (strain MoPn / Nigg).